We begin with the raw amino-acid sequence, 972 residues long: UPF0746 protein DDB_G0280785 (972 aa).

Residues 1 to 19 show a composition bias toward basic and acidic residues; the sequence is MISNKRKEIENINRHHEKD. The disordered stretch occupies residues 1 to 30; the sequence is MISNKRKEIENINRHHEKDNDDDDSDGIDN. Residues 44 to 78 form the SAP domain; that stretch reads SGSTNYRELQIIAKSLGLASNGKKQLVYNRIEGYF.

This sequence belongs to the UPF0746 family.

The sequence is that of UPF0746 protein DDB_G0280785 from Dictyostelium discoideum (Social amoeba).